The following is a 268-amino-acid chain: Pantothenate synthetase (268 aa).

18-25 (MGYLHEGH) lines the ATP pocket. The Proton donor role is filled by His-25. Gln-49 contacts (R)-pantoate. Position 49 (Gln-49) interacts with beta-alanine. Residue 135–138 (GQKD) coordinates ATP. Position 141 (Gln-141) interacts with (R)-pantoate. ATP-binding positions include Val-164 and 172-175 (LSSR).

This sequence belongs to the pantothenate synthetase family. As to quaternary structure, homodimer.

It localises to the cytoplasm. It catalyses the reaction (R)-pantoate + beta-alanine + ATP = (R)-pantothenate + AMP + diphosphate + H(+). It participates in cofactor biosynthesis; (R)-pantothenate biosynthesis; (R)-pantothenate from (R)-pantoate and beta-alanine: step 1/1. In terms of biological role, catalyzes the condensation of pantoate with beta-alanine in an ATP-dependent reaction via a pantoyl-adenylate intermediate. The protein is Pantothenate synthetase of Dehalococcoides mccartyi (strain ATCC BAA-2266 / KCTC 15142 / 195) (Dehalococcoides ethenogenes (strain 195)).